The following is a 484-amino-acid chain: Ribosomal RNA small subunit methyltransferase F (484 aa).

S-adenosyl-L-methionine contacts are provided by residues 126 to 132, Glu150, Asp177, and Asp195; that span reads AAAPGSK. The active-site Nucleophile is the Cys248.

It belongs to the class I-like SAM-binding methyltransferase superfamily. RsmB/NOP family.

The protein localises to the cytoplasm. The catalysed reaction is cytidine(1407) in 16S rRNA + S-adenosyl-L-methionine = 5-methylcytidine(1407) in 16S rRNA + S-adenosyl-L-homocysteine + H(+). Its function is as follows. Specifically methylates the cytosine at position 1407 (m5C1407) of 16S rRNA. The sequence is that of Ribosomal RNA small subunit methyltransferase F from Pectobacterium carotovorum subsp. carotovorum (strain PC1).